Here is a 770-residue protein sequence, read N- to C-terminus: Shutoff protein (770 aa).

Disordered regions lie at residues 1-20 (MEEDLKLQPDSETLTTPNSE) and 30-49 (EEENEQVEQDPGYVTPPEDG). Over residues 10–19 (DSETLTTPNS) the composition is skewed to polar residues. The tract at residues 248–312 (VMDQVLIKRA…AVLVTVELEC (65 aa)) is binding to host EIF4G. The region spanning 315–433 (RFFANPQTLR…ELWTSFDERT (119 aa)) is the RRM domain. A phosphotyrosine; by host mark is found at Tyr332 and Tyr647. A disordered region spans residues 661–770 (LSAAASCRSQ…TATMFTESQP (110 aa)). The segment covering 726–739 (GGPRGRGGRNHRQR) has biased composition (basic residues). The segment covering 742–755 (TIFQKTRSEPTSEN) has biased composition (polar residues).

This sequence belongs to the adenoviridae shutoff protein family. As to quaternary structure, monomer. Interacts with hexon protein; this interaction allows chaperoning and trimerization of hexon proteins. Interacts (via N-terminus) with host initiation factor EIF4G (via C-terminus). Interacts (via RRM domain) with viral mRNAs that contain the tripartite leader; this interaction allows ribosome shunting and expression of viral late mRNAs. Post-translationally, might be cleaved by the viral protease. In terms of processing, phosphorylated. Tyrosine phosphorylation enhances preferential binding to tripartite leader mRNAs and allows ribosome shunting. Methylated. Asymmetric dimethylation by host PRMT1 of the Arg/Gly-rich region may regulate shutoff protein binding to hexon and promote the capsid assembly in the nucleus.

The protein resides in the host cytoplasm. In terms of biological role, protein that inhibits host translation while promoting late viral translation by ribosome shunting. Blocks host cap-dependent translation by binding to eIF4G, displacing MKNK1 from cap initiation complexes and preventing EIF4E phosphorylation. Binds to the tripartite leader sequence of viral late mRNAs and recruits host eIF4G, PABPC1/poly-A binding protein and 40S ribosomes subunits on viral mRNAs, allowing ribosome shunting and efficient translation of late viral mRNAs even though conventional translation via ribosome scanning from the cap has been shut off in the host cell. During assembly, acts as a chaperone protein that helps hexon proteins assembly into trimers. In Human adenovirus F serotype 40 (HAdV-40), this protein is Shutoff protein.